A 380-amino-acid chain; its full sequence is Gap junction gamma-1 protein (380 aa).

Residues 1 to 22 (MSWSFLTRLLDEISNHSTFVGK) are Cytoplasmic-facing. A helical transmembrane segment spans residues 23–45 (IWLTLFIIFRIVLTVVGGESIYY). Topologically, residues 46-75 (DEQSKFVCNTQQPGCENVCYDAFAPLSHVR) are extracellular. Residues 76 to 95 (FWVFQIILITTPTIMYLGFA) traverse the membrane as a helical segment. At 96–171 (MHKIARSNDV…RRIKRDGLMK (76 aa)) the chain is on the cytoplasmic side. Residues 172–194 (VYILQLLSRIIFEVGFLFGQYIL) traverse the membrane as a helical segment. Over 195 to 228 (YGFEVAPSYVCTRSPCPHTVDCFVSRPTEKTIFL) the chain is Extracellular. The helical transmembrane segment at 229–251 (LIMYAVSCLCLSLTVLEILHLGL) threads the bilayer. Residues 252-380 (SGIRDAFRRR…GSKCEKGIHA (129 aa)) lie on the Cytoplasmic side of the membrane. Residues 337 to 380 (AYQNGESSPSRSSSPESNGTAVEQNRLNFAQEKQGSKCEKGIHA) are disordered. Low complexity predominate over residues 342–353 (ESSPSRSSSPES). Polar residues predominate over residues 354 to 369 (NGTAVEQNRLNFAQEK). The segment covering 370-380 (QGSKCEKGIHA) has biased composition (basic and acidic residues).

It belongs to the connexin family. Gamma-type subfamily. In terms of assembly, a connexon is composed of a hexamer of connexins.

It localises to the cell membrane. The protein resides in the cell junction. The protein localises to the gap junction. In terms of biological role, one gap junction consists of a cluster of closely packed pairs of transmembrane channels, the connexons, through which materials of low MW diffuse from one cell to a neighboring cell. Participates in a developmental pathway for formation of the notochord and tail. This chain is Gap junction gamma-1 protein (gjc1), found in Danio rerio (Zebrafish).